Consider the following 585-residue polypeptide: Proline--tRNA ligase (585 aa).

Belongs to the class-II aminoacyl-tRNA synthetase family. ProS type 1 subfamily. Homodimer.

It localises to the cytoplasm. The enzyme catalyses tRNA(Pro) + L-proline + ATP = L-prolyl-tRNA(Pro) + AMP + diphosphate. In terms of biological role, catalyzes the attachment of proline to tRNA(Pro) in a two-step reaction: proline is first activated by ATP to form Pro-AMP and then transferred to the acceptor end of tRNA(Pro). As ProRS can inadvertently accommodate and process non-cognate amino acids such as alanine and cysteine, to avoid such errors it has two additional distinct editing activities against alanine. One activity is designated as 'pretransfer' editing and involves the tRNA(Pro)-independent hydrolysis of activated Ala-AMP. The other activity is designated 'posttransfer' editing and involves deacylation of mischarged Ala-tRNA(Pro). The misacylated Cys-tRNA(Pro) is not edited by ProRS. This chain is Proline--tRNA ligase, found in Acidobacterium capsulatum (strain ATCC 51196 / DSM 11244 / BCRC 80197 / JCM 7670 / NBRC 15755 / NCIMB 13165 / 161).